A 122-amino-acid polypeptide reads, in one-letter code: Large ribosomal subunit protein uL14 (122 aa).

This sequence belongs to the universal ribosomal protein uL14 family. In terms of assembly, part of the 50S ribosomal subunit. Forms a cluster with proteins L3 and L19. In the 70S ribosome, L14 and L19 interact and together make contacts with the 16S rRNA in bridges B5 and B8.

Functionally, binds to 23S rRNA. Forms part of two intersubunit bridges in the 70S ribosome. This chain is Large ribosomal subunit protein uL14, found in Agrobacterium fabrum (strain C58 / ATCC 33970) (Agrobacterium tumefaciens (strain C58)).